A 438-amino-acid chain; its full sequence is 3-phosphoshikimate 1-carboxyvinyltransferase (438 aa).

K21 contacts phosphoenolpyruvate. Positions 22 and 26 each coordinate 3-phosphoshikimate. A phosphoenolpyruvate region spans residues 93–96 (NSGT). Phosphoenolpyruvate-binding residues include G95, T96, and R123. 3-phosphoshikimate contacts are provided by S167, A168, Q169, D315, and K342. Q169 contributes to the phosphoenolpyruvate binding site. D315 serves as the catalytic Proton acceptor. Residues R346 and R387 each contribute to the phosphoenolpyruvate site.

It belongs to the EPSP synthase family. In terms of assembly, homodimer or homotetramer.

Its subcellular location is the cytoplasm. It carries out the reaction 3-phosphoshikimate + phosphoenolpyruvate = 5-O-(1-carboxyvinyl)-3-phosphoshikimate + phosphate. The protein operates within metabolic intermediate biosynthesis; chorismate biosynthesis; chorismate from D-erythrose 4-phosphate and phosphoenolpyruvate: step 6/7. In terms of biological role, catalyzes the transfer of the enolpyruvyl moiety of phosphoenolpyruvate (PEP) to the 5-hydroxyl of shikimate-3-phosphate (S3P) to produce enolpyruvyl shikimate-3-phosphate and inorganic phosphate. The chain is 3-phosphoshikimate 1-carboxyvinyltransferase from Coxiella burnetii (strain RSA 493 / Nine Mile phase I).